Consider the following 446-residue polypeptide: Glucarate dehydratase-related protein (446 aa).

Residues H31, T104, Y149, and K204 each contribute to the substrate site. K206 (proton acceptor) is an active-site residue. Residues D234, E265, and N288 each coordinate Mg(2+). D234 to N236 serves as a coordination point for substrate. Residues N288, H338 to N340, H367, and R421 each bind substrate. The active-site Proton acceptor is H338.

The protein belongs to the mandelate racemase/muconate lactonizing enzyme family. GlucD subfamily. A divalent metal cation is required as a cofactor.

In terms of biological role, does not seem to have an in-vivo activity on glucarate or idarate. Its real substrate is unknown. The protein is Glucarate dehydratase-related protein (gudX) of Escherichia coli (strain K12).